Reading from the N-terminus, the 424-residue chain is Anaerobic glycerol-3-phosphate dehydrogenase subunit B (424 aa).

The protein belongs to the anaerobic G-3-P dehydrogenase subunit B family. As to quaternary structure, composed of a catalytic GlpA/B dimer and of membrane bound GlpC. The cofactor is FMN.

It catalyses the reaction a quinone + sn-glycerol 3-phosphate = dihydroxyacetone phosphate + a quinol. It functions in the pathway polyol metabolism; glycerol degradation via glycerol kinase pathway; glycerone phosphate from sn-glycerol 3-phosphate (anaerobic route): step 1/1. In terms of biological role, conversion of glycerol 3-phosphate to dihydroxyacetone. Uses fumarate or nitrate as electron acceptor. This is Anaerobic glycerol-3-phosphate dehydrogenase subunit B from Yersinia pestis bv. Antiqua (strain Antiqua).